A 100-amino-acid polypeptide reads, in one-letter code: UPF0125 protein HD_1828 (100 aa).

Belongs to the UPF0125 (RnfH) family.

The protein is UPF0125 protein HD_1828 of Haemophilus ducreyi (strain 35000HP / ATCC 700724).